The following is a 1529-amino-acid chain: Protein STU1 (1529 aa).

Disordered regions lie at residues Ser-266–Ile-314, Lys-617–Ala-638, Lys-651–Ile-745, and Ser-1070–Ile-1090. The span at Thr-273–Ser-290 shows a compositional bias: low complexity. 2 stretches are compositionally biased toward polar residues: residues Arg-295–Ser-308 and Arg-619–Thr-634. Low complexity predominate over residues Thr-660–Ser-674. The segment covering Thr-708–Ala-723 has biased composition (polar residues).

The protein belongs to the CLASP family. As to quaternary structure, interacts with microtubules.

Its subcellular location is the cytoplasm. The protein localises to the cytoskeleton. It is found in the nucleus. The protein resides in the spindle. Functionally, microtubule binding protein that promotes the stabilization of dynamic microtubules. Required for mitotic spindle formation. The chain is Protein STU1 (STU1) from Debaryomyces hansenii (strain ATCC 36239 / CBS 767 / BCRC 21394 / JCM 1990 / NBRC 0083 / IGC 2968) (Yeast).